We begin with the raw amino-acid sequence, 261 residues long: MEMO1 family protein AF_2310 (261 aa).

The protein belongs to the MEMO1 family.

The protein is MEMO1 family protein AF_2310 of Archaeoglobus fulgidus (strain ATCC 49558 / DSM 4304 / JCM 9628 / NBRC 100126 / VC-16).